The primary structure comprises 1023 residues: Transmembrane protein 132A (1023 aa).

The first 35 residues, M1 to D35, serve as a signal peptide directing secretion. At C36 to A852 the chain is on the extracellular side. The segment at A212–Q246 is disordered. N280 carries N-linked (GlcNAc...) asparagine glycosylation. 2 disordered regions span residues W512–E533 and L766–A839. The span at P515–E527 shows a compositional bias: low complexity. The residue at position 529 (S529) is a Phosphoserine; by FAM20C. The tract at residues I611–P916 is binds to HSPA5/GRP78. The tract at residues L671–S1023 is confers cellular localization similar to full-length form. Low complexity predominate over residues S778–T790. Residues G809 to T823 are compositionally biased toward basic and acidic residues. Positions E824–M836 are enriched in acidic residues. The helical transmembrane segment at L853 to L873 threads the bilayer. Over R874–S1023 the chain is Cytoplasmic. The interval L905 to K961 is disordered.

This sequence belongs to the TMEM132 family. As to quaternary structure, interacts with HSPA5/GRP78.

It localises to the golgi apparatus membrane. The protein resides in the endoplasmic reticulum membrane. In terms of biological role, may play a role in embryonic and postnatal development of the brain. Increased resistance to cell death induced by serum starvation in cultured cells. Regulates cAMP-induced GFAP gene expression via STAT3 phosphorylation. The protein is Transmembrane protein 132A (TMEM132A) of Homo sapiens (Human).